Here is a 264-residue protein sequence, read N- to C-terminus: Small ribosomal subunit protein uS3 (264 aa).

The 69-residue stretch at 39-107 (VRDFLKKKLK…PVHVNIEEIR (69 aa)) folds into the KH type-2 domain. Positions 211–264 (NDAPVVEEPQDDRRRRPGRPEGRRREGEGRPGGNRRGGAGAGRRAAPGDAKSGE) are disordered. A compositionally biased stretch (basic and acidic residues) spans 221–239 (DDRRRRPGRPEGRRREGEG). A compositionally biased stretch (gly residues) spans 240–251 (RPGGNRRGGAGA).

It belongs to the universal ribosomal protein uS3 family. In terms of assembly, part of the 30S ribosomal subunit. Forms a tight complex with proteins S10 and S14.

Binds the lower part of the 30S subunit head. Binds mRNA in the 70S ribosome, positioning it for translation. The sequence is that of Small ribosomal subunit protein uS3 from Cupriavidus pinatubonensis (strain JMP 134 / LMG 1197) (Cupriavidus necator (strain JMP 134)).